Consider the following 258-residue polypeptide: Hemin import ATP-binding protein HmuV (258 aa).

In terms of domain architecture, ABC transporter spans L2 to P242. An ATP-binding site is contributed by G34–S41.

Belongs to the ABC transporter superfamily. Heme (hemin) importer (TC 3.A.1.14.5) family. In terms of assembly, the complex is composed of two ATP-binding proteins (HmuV), two transmembrane proteins (HmuU) and a solute-binding protein (HmuT).

The protein localises to the cell inner membrane. Its function is as follows. Part of the ABC transporter complex HmuTUV involved in hemin import. Responsible for energy coupling to the transport system. This Hydrogenovibrio crunogenus (strain DSM 25203 / XCL-2) (Thiomicrospira crunogena) protein is Hemin import ATP-binding protein HmuV.